The chain runs to 564 residues: Aspyridones efflux protein (564 aa).

Low complexity predominate over residues 1–17 (MHPDQADTAAMQQQTTT). A disordered region spans residues 1-49 (MHPDQADTAAMQQQTTTECSDRSRPEKAEEGHAREHTVTRTCSREPEQT). Basic and acidic residues predominate over residues 19–47 (CSDRSRPEKAEEGHAREHTVTRTCSREPE). 10 helical membrane-spanning segments follow: residues 66–86 (AICL…TAIP), 127–147 (WTFL…ATAP), 158–178 (IAGC…THSV), 185–205 (LFMA…PPLG), 216–236 (WCFW…VFLF), 260–280 (VGTL…QWGG), 287–307 (SGIV…FGIV), 335–355 (FALG…FQGV), 368–388 (LPML…VTII), and 392–412 (APFM…LLLF). An N-linked (GlcNAc...) asparagine glycan is attached at Asn-415. 2 consecutive transmembrane segments (helical) span residues 416–436 (VTAA…GFGW) and 454–474 (IATA…VSVA). Asn-524 carries an N-linked (GlcNAc...) asparagine glycan. A helical membrane pass occupies residues 528–548 (LSAFFVATIMAIMSLVGCTFV).

The protein belongs to the major facilitator superfamily. TCR/Tet family.

Its subcellular location is the cell membrane. Efflux pump that may be involved in the secretion of leporins. This is Aspyridones efflux protein (TP) from Neocamarosporium betae (Beet black rot fungus).